A 486-amino-acid polypeptide reads, in one-letter code: NADH dehydrogenase [ubiquinone] flavoprotein 1, mitochondrial (486 aa).

A mitochondrion-targeting transit peptide spans 1 to 30 (MAPVRGILGLQRAVSIWKESNRLTPALRSF). Over residues 31–40 (STQAASTSTT) the composition is skewed to low complexity. Residues 31–57 (STQAASTSTTPQPPPPPPPPEKTHFGG) form a disordered region. A compositionally biased stretch (pro residues) spans 41-50 (PQPPPPPPPP). Residue 110 to 119 (GRGGAGFPSG) participates in NADH binding. 222-270 (FGAGAYICGEETALLESLEGKQGKPRLKPPFPANAGLYGCPTTVTNVET) contributes to the FMN binding site. Cys-402, Cys-405, Cys-408, and Cys-448 together coordinate [4Fe-4S] cluster.

This sequence belongs to the complex I 51 kDa subunit family. Complex I is composed of at least 49 different subunits. This is a component of the flavoprotein-sulfur (FP) fragment of the enzyme. It depends on FMN as a cofactor. Requires [4Fe-4S] cluster as cofactor.

The protein resides in the mitochondrion inner membrane. It carries out the reaction a ubiquinone + NADH + 5 H(+)(in) = a ubiquinol + NAD(+) + 4 H(+)(out). In terms of biological role, core subunit of the mitochondrial membrane respiratory chain NADH dehydrogenase (Complex I) that is believed to belong to the minimal assembly required for catalysis. Complex I functions in the transfer of electrons from NADH to the respiratory chain. The immediate electron acceptor for the enzyme is believed to be ubiquinone. The sequence is that of NADH dehydrogenase [ubiquinone] flavoprotein 1, mitochondrial from Arabidopsis thaliana (Mouse-ear cress).